Here is a 250-residue protein sequence, read N- to C-terminus: Transcriptional activator protein EchR (250 aa).

Residues 173-238 (KSQEPNIFSQ…HAIRLGVEMN (66 aa)) form the HTH luxR-type domain. The segment at residues 197 to 216 (YQEIALILGITTSTVKFHIG) is a DNA-binding region (H-T-H motif).

It belongs to the autoinducer-regulated transcriptional regulatory protein family.

In terms of biological role, functions as a potential ohlL-responsive transcriptional regulator. The chain is Transcriptional activator protein EchR (echR) from Dickeya chrysanthemi (Pectobacterium chrysanthemi).